We begin with the raw amino-acid sequence, 507 residues long: MFS transporter fsa7 (507 aa).

The segment at Met-1 to Trp-65 is disordered. N-linked (GlcNAc...) asparagine glycosylation is present at Asn-64. The chain crosses the membrane as a helical span at residues Leu-72–Ala-92. An N-linked (GlcNAc...) asparagine glycan is attached at Asn-106. Helical transmembrane passes span Ala-111–Leu-131, Phe-146–Val-166, Ile-169–Leu-189, Ala-200–Val-220, and Trp-228–Met-248. N-linked (GlcNAc...) asparagine glycosylation is present at Asn-252. 6 helical membrane passes run Pro-302 to Phe-322, Gly-341 to Leu-361, Leu-379 to Thr-399, Trp-406 to Pro-426, Ile-429 to Leu-449, and Gly-472 to Phe-492.

Belongs to the major facilitator superfamily.

The protein localises to the cell membrane. Efflux pump that might be required for efficient secretion of fusarisetin A or other secondary metabolies produced by the fusarisetin A gene cluster. The chain is MFS transporter fsa7 from Fusarium sp. (strain FN080326).